The following is a 227-amino-acid chain: Cytochrome c oxidase subunit 2 (227 aa).

At 1-14 (MAYPLQLGFQDATS) the chain is on the mitochondrial intermembrane side. The helical transmembrane segment at 15–45 (PIMEELLHFHDHTLMIVFLISSLVLYIISLM) threads the bilayer. The Mitochondrial matrix portion of the chain corresponds to 46 to 59 (LTTKLTHTSTMDAQ). A helical membrane pass occupies residues 60 to 87 (EVETIWTILPAIILILIALPSLRILYMM). The Mitochondrial intermembrane segment spans residues 88-227 (DEINNPSLTI…HFEKWSTSML (140 aa)). Residues His161, Cys196, Glu198, Cys200, His204, and Met207 each contribute to the Cu cation site. Glu198 contributes to the Mg(2+) binding site.

The protein belongs to the cytochrome c oxidase subunit 2 family. In terms of assembly, component of the cytochrome c oxidase (complex IV, CIV), a multisubunit enzyme composed of 14 subunits. The complex is composed of a catalytic core of 3 subunits MT-CO1, MT-CO2 and MT-CO3, encoded in the mitochondrial DNA, and 11 supernumerary subunits COX4I, COX5A, COX5B, COX6A, COX6B, COX6C, COX7A, COX7B, COX7C, COX8 and NDUFA4, which are encoded in the nuclear genome. The complex exists as a monomer or a dimer and forms supercomplexes (SCs) in the inner mitochondrial membrane with NADH-ubiquinone oxidoreductase (complex I, CI) and ubiquinol-cytochrome c oxidoreductase (cytochrome b-c1 complex, complex III, CIII), resulting in different assemblies (supercomplex SCI(1)III(2)IV(1) and megacomplex MCI(2)III(2)IV(2)). Found in a complex with TMEM177, COA6, COX18, COX20, SCO1 and SCO2. Interacts with TMEM177 in a COX20-dependent manner. Interacts with COX20. Interacts with COX16. Requires Cu cation as cofactor.

The protein localises to the mitochondrion inner membrane. It catalyses the reaction 4 Fe(II)-[cytochrome c] + O2 + 8 H(+)(in) = 4 Fe(III)-[cytochrome c] + 2 H2O + 4 H(+)(out). Component of the cytochrome c oxidase, the last enzyme in the mitochondrial electron transport chain which drives oxidative phosphorylation. The respiratory chain contains 3 multisubunit complexes succinate dehydrogenase (complex II, CII), ubiquinol-cytochrome c oxidoreductase (cytochrome b-c1 complex, complex III, CIII) and cytochrome c oxidase (complex IV, CIV), that cooperate to transfer electrons derived from NADH and succinate to molecular oxygen, creating an electrochemical gradient over the inner membrane that drives transmembrane transport and the ATP synthase. Cytochrome c oxidase is the component of the respiratory chain that catalyzes the reduction of oxygen to water. Electrons originating from reduced cytochrome c in the intermembrane space (IMS) are transferred via the dinuclear copper A center (CU(A)) of subunit 2 and heme A of subunit 1 to the active site in subunit 1, a binuclear center (BNC) formed by heme A3 and copper B (CU(B)). The BNC reduces molecular oxygen to 2 water molecules using 4 electrons from cytochrome c in the IMS and 4 protons from the mitochondrial matrix. The protein is Cytochrome c oxidase subunit 2 (MT-CO2) of Rhinoceros unicornis (Greater Indian rhinoceros).